The following is a 1527-amino-acid chain: Lysophospholipase nte1 (1527 aa).

The Cytoplasmic segment spans residues 1–73 (MADSGASVPS…SPPTPTTMVG (73 aa)). A helical membrane pass occupies residues 74–94 (WIGWVFSLVFQTIPSVLYWVI). The Lumenal portion of the chain corresponds to 95–116 (TFSTITLPTWLFTLFSMSLTFT). Residues 117–137 (MNFTTLLLIVLGLVSTVSWFI) traverse the membrane as a helical segment. Topologically, residues 138–1527 (RYRFLNMYSR…RTLAPRRASI (1390 aa)) are cytoplasmic. Over residues 299–310 (GSSSSMSSVQPS) the composition is skewed to low complexity. 3 disordered regions span residues 299-387 (GSSS…RRKS), 567-596 (DQFA…QRKD), and 765-785 (ATSR…KKPS). The span at 364–377 (RASSYHPNGQSTAS) shows a compositional bias: polar residues. Residues 682–809 (GGTS…SYRS) and 846–966 (RLTG…IAQR) contribute to the a nucleoside 3',5'-cyclic phosphate site. The PNPLA domain maps to 1224-1388 (LVLGGGGARG…IDNLTVAHMK (165 aa)). Positions 1228–1233 (GGGARG) match the GXGXXG motif. The short motif at 1255–1259 (GTSIG) is the GXSXG element. Residue S1257 is the Nucleophile of the active site. The Proton acceptor role is filled by D1375. The DGA/G motif lies at 1375-1377 (DGG). The disordered stretch occupies residues 1504–1527 (LPLPEENEEKKKLQRTLAPRRASI).

It belongs to the NTE family.

The protein resides in the endoplasmic reticulum membrane. The catalysed reaction is a 1-acyl-sn-glycero-3-phosphocholine + H2O = sn-glycerol 3-phosphocholine + a fatty acid + H(+). Its activity is regulated as follows. Inhibited by organophosphorus esters. Functionally, intracellular phospholipase B that catalyzes the double deacylation of phosphatidylcholine (PC) to glycerophosphocholine (GroPCho). Plays an important role in membrane lipid homeostasis. Responsible for the rapid PC turnover in response to inositol, elevated temperatures, or when choline is present in the growth medium. This chain is Lysophospholipase nte1 (nte1), found in Emericella nidulans (strain FGSC A4 / ATCC 38163 / CBS 112.46 / NRRL 194 / M139) (Aspergillus nidulans).